The sequence spans 224 residues: MKKSLQIALDGPAGAGKSTIAKSLAKQLGYVYIDTGAIYRAVTYRALNEGIALEDGPALAQMIENMSLRLVPSEEGQRVFDGEEEVTSVIRSSEVTNNVSFVARQPEVRDALMDLQRDLAKKGGVVMDGRDIGTHVLPNADLKVFMTASVEERARRRHEENVSKGIPSDYEQLIEEIALRDKRDSEREVAPLRQAEDAHFLDTTTLSIDGVVQAIERLIEEVKA.

An ATP-binding site is contributed by 11–19 (GPAGAGKST).

Belongs to the cytidylate kinase family. Type 1 subfamily.

It localises to the cytoplasm. The enzyme catalyses CMP + ATP = CDP + ADP. It catalyses the reaction dCMP + ATP = dCDP + ADP. The sequence is that of Cytidylate kinase from Exiguobacterium sp. (strain ATCC BAA-1283 / AT1b).